The sequence spans 122 residues: Large ribosomal subunit protein uL18 (122 aa).

This sequence belongs to the universal ribosomal protein uL18 family. Part of the 50S ribosomal subunit; part of the 5S rRNA/L5/L18/L25 subcomplex. Contacts the 5S and 23S rRNAs.

This is one of the proteins that bind and probably mediate the attachment of the 5S RNA into the large ribosomal subunit, where it forms part of the central protuberance. The chain is Large ribosomal subunit protein uL18 from Agathobacter rectalis (strain ATCC 33656 / DSM 3377 / JCM 17463 / KCTC 5835 / VPI 0990) (Eubacterium rectale).